We begin with the raw amino-acid sequence, 276 residues long: Melibiose/raffinose/stachyose import permease protein MelC (276 aa).

6 consecutive transmembrane segments (helical) span residues 11-31, 74-94, 104-124, 139-159, 186-206, and 240-260; these read IITLLAAIVACAHFIPFYILL, IITGFSALLLIIFGSLAAYPL, AVFALLISIMIIPPLTSMVPL, IAIFINTAAYMPLTVFLYSGF, IVFPLLKPITATICIISCVFI, and LHLVAAAALMAMLPMVVLFLA. The region spanning 69–261 is the ABC transmembrane type-1 domain; the sequence is FINTMIITGF…LPMVVLFLAL (193 aa).

This sequence belongs to the binding-protein-dependent transport system permease family. As to quaternary structure, the complex is composed of two ATP-binding proteins (MsmX), two transmembrane proteins (MelC and MelD) and a solute-binding protein (MelE).

The protein resides in the cell membrane. Its function is as follows. Part of the ABC transporter complex MelEDC-MsmX involved in melibiose, raffinose and stachyose import. Probably responsible for the translocation of the substrate across the membrane. In Bacillus subtilis (strain 168), this protein is Melibiose/raffinose/stachyose import permease protein MelC.